We begin with the raw amino-acid sequence, 330 residues long: Ubiquinone biosynthesis protein COQ4, mitochondrial (330 aa).

A mitochondrion-targeting transit peptide spans 1-31; sequence MLQSTKVTKSVLTNVLRVEQRRGFLLSGAAV. Zn(2+)-binding residues include histidine 212, aspartate 213, histidine 216, and glutamate 228.

This sequence belongs to the COQ4 family. In terms of assembly, component of a multi-subunit COQ enzyme complex, composed of at least COQ3, COQ4, COQ5, COQ6, COQ7 and COQ9. The cofactor is Zn(2+).

The protein resides in the mitochondrion inner membrane. It carries out the reaction a 4-hydroxy-3-methoxy-5-(all-trans-polyprenyl)benzoate + H(+) = a 2-methoxy-6-(all-trans-polyprenyl)phenol + CO2. Its pathway is cofactor biosynthesis; ubiquinone biosynthesis. Functionally, lyase that catalyzes the C1-decarboxylation of 4-hydroxy-3-methoxy-5-(all-trans-polyprenyl)benzoic acid into 2-methoxy-6-(all-trans-polyprenyl)phenol during ubiquinone biosynthesis. The protein is Ubiquinone biosynthesis protein COQ4, mitochondrial of Candida glabrata (strain ATCC 2001 / BCRC 20586 / JCM 3761 / NBRC 0622 / NRRL Y-65 / CBS 138) (Yeast).